Reading from the N-terminus, the 130-residue chain is Secreted RxLR effector protein 66 (130 aa).

The N-terminal stretch at 1-21 is a signal peptide; the sequence is MHLRLLMSTVITATLIVSNNA. Residues 32 to 62 carry the RxLR-dEER motif; it reads RALRGASTVGIAADNLLAAHFSPTLKHKESR. A helical transmembrane segment spans residues 104–124; it reads GPAIAIFAGVAATFILIDYLI.

It belongs to the RxLR effector family.

It is found in the secreted. Its subcellular location is the host cytoplasm. It localises to the host nucleus. The protein localises to the membrane. Effector that acts as a broad suppressor of cell death to interrupt plant immunity. Inhibits cell death induced by cell death-inducing proteins, including the PAMP elicitor INF1 from P.infestans. This is Secreted RxLR effector protein 66 from Plasmopara viticola (Downy mildew of grapevine).